The sequence spans 185 residues: Large ribosomal subunit protein uL5 (185 aa).

Belongs to the universal ribosomal protein uL5 family. Part of the 50S ribosomal subunit; part of the 5S rRNA/L5/L18/L25 subcomplex. Contacts the 5S rRNA and the P site tRNA. Forms a bridge to the 30S subunit in the 70S ribosome.

In terms of biological role, this is one of the proteins that bind and probably mediate the attachment of the 5S RNA into the large ribosomal subunit, where it forms part of the central protuberance. In the 70S ribosome it contacts protein S13 of the 30S subunit (bridge B1b), connecting the 2 subunits; this bridge is implicated in subunit movement. Contacts the P site tRNA; the 5S rRNA and some of its associated proteins might help stabilize positioning of ribosome-bound tRNAs. The sequence is that of Large ribosomal subunit protein uL5 from Afipia carboxidovorans (strain ATCC 49405 / DSM 1227 / KCTC 32145 / OM5) (Oligotropha carboxidovorans).